The following is a 114-amino-acid chain: uncharacterized protein (114 aa).

The active site involves cysteine 10.

This sequence belongs to the ArsC family.

This is an uncharacterized protein from Haemophilus influenzae (strain ATCC 51907 / DSM 11121 / KW20 / Rd).